Here is a 211-residue protein sequence, read N- to C-terminus: Large ribosomal subunit protein eL13 (211 aa).

Lys16 bears the N6-acetyllysine mark. 3 positions are modified to phosphoserine: Ser52, Ser77, and Ser106. Residues Lys123 and Lys145 each participate in a glycyl lysine isopeptide (Lys-Gly) (interchain with G-Cter in SUMO2) cross-link. Lys174 participates in a covalent cross-link: Glycyl lysine isopeptide (Lys-Gly) (interchain with G-Cter in SUMO1); alternate. Glycyl lysine isopeptide (Lys-Gly) (interchain with G-Cter in SUMO2); alternate cross-links involve residues Lys174 and Lys177. At Lys177 the chain carries N6-acetyllysine; alternate.

This sequence belongs to the eukaryotic ribosomal protein eL13 family. Component of the 60S large ribosomal subunit (LSU).

The protein localises to the cytoplasm. In terms of biological role, component of the ribosome, a large ribonucleoprotein complex responsible for the synthesis of proteins in the cell. The small ribosomal subunit (SSU) binds messenger RNAs (mRNAs) and translates the encoded message by selecting cognate aminoacyl-transfer RNA (tRNA) molecules. The large subunit (LSU) contains the ribosomal catalytic site termed the peptidyl transferase center (PTC), which catalyzes the formation of peptide bonds, thereby polymerizing the amino acids delivered by tRNAs into a polypeptide chain. The nascent polypeptides leave the ribosome through a tunnel in the LSU and interact with protein factors that function in enzymatic processing, targeting, and the membrane insertion of nascent chains at the exit of the ribosomal tunnel. As part of the LSU, it is probably required for its formation and the maturation of rRNAs. Plays a role in bone development. In Cricetulus griseus (Chinese hamster), this protein is Large ribosomal subunit protein eL13 (RPL13).